The sequence spans 32 residues: MSDIN-like toxin proprotein 2 (32 aa).

A propeptide spanning residues 1–10 (MSDINATRVP) is cleaved from the precursor. A cross-link (cyclopeptide (Ala-Pro)) is located at residues 11 to 17 (AWLAECP). Residues 18–32 (CVGDDISHLLTRGEK) constitute a propeptide that is removed on maturation.

The protein belongs to the MSDIN fungal toxin family. Post-translationally, processed by the macrocyclase-peptidase enzyme POPB to yield a toxic cyclic heptapeptide. POPB first removes 10 residues from the N-terminus. Conformational trapping of the remaining peptide forces the enzyme to release this intermediate rather than proceed to macrocyclization. The enzyme rebinds the remaining peptide in a different conformation and catalyzes macrocyclization of the N-terminal 7 residues.

Probable toxin that belongs to the MSDIN-like toxin family responsible for a large number of food poisoning cases and deaths. In Amanita rimosa, this protein is MSDIN-like toxin proprotein 2.